The chain runs to 199 residues: Protein-methionine-sulfoxide reductase heme-binding subunit MsrQ (199 aa).

A run of 6 helical transmembrane segments spans residues 8–28 (IAWLKVFLHLAGFLPLVWLFW), 54–74 (FLLATLLVAPLARYAKQPLLI), 82–102 (LWCFAWATLHLTSYTLLELGI), 116–136 (PYLTLGMICWVILLALAATST), 149–169 (LLHNFVYLVAILAPIHYLWSV), and 171–191 (IVSPQPIIYALLAVVLLACRY).

Belongs to the MsrQ family. Heterodimer of a catalytic subunit (MsrP) and a heme-binding subunit (MsrQ). The cofactor is FMN. Heme b is required as a cofactor.

Its subcellular location is the cell inner membrane. Part of the MsrPQ system that repairs oxidized periplasmic proteins containing methionine sulfoxide residues (Met-O), using respiratory chain electrons. Thus protects these proteins from oxidative-stress damage caused by reactive species of oxygen and chlorine generated by the host defense mechanisms. MsrPQ is essential for the maintenance of envelope integrity under bleach stress, rescuing a wide series of structurally unrelated periplasmic proteins from methionine oxidation. MsrQ provides electrons for reduction to the reductase catalytic subunit MsrP, using the quinone pool of the respiratory chain. This is Protein-methionine-sulfoxide reductase heme-binding subunit MsrQ from Klebsiella pneumoniae (strain 342).